A 292-amino-acid polypeptide reads, in one-letter code: Aquaporin-3 (292 aa).

Over 1-24 (MGRQKELVSRCGEMLHIRYRLLRQ) the chain is Cytoplasmic. Residues 25–42 (ALAECLGTLILVMFGCGS) traverse the membrane as a helical segment. Residues 43 to 56 (VAQVVLSRGTHGGF) lie on the Extracellular side of the membrane. The chain crosses the membrane as a helical span at residues 57 to 74 (LTINLAFGFAVTLGILIA). Over 75-78 (GQVS) the chain is Cytoplasmic. Residues 79–92 (GAHLNPAVTFAMCF) constitute an intramembrane region (discontinuously helical). The NPA 1 signature appears at 83-85 (NPA). The Cytoplasmic segment spans residues 93 to 100 (LAREPWIK). The chain crosses the membrane as a helical span at residues 101–121 (LPIYTLAQTLGAFLGAGIVFG). Topologically, residues 122–159 (LYYDAIWHFADNQLFVSGPNGTAGIFATYPSGHLDMIN) are extracellular. A glycan (N-linked (GlcNAc...) asparagine) is linked at N141. A helical membrane pass occupies residues 160-177 (GFFDQFIGTASLIVCVLA). The Cytoplasmic segment spans residues 178–189 (IVDPYNNPVPRG). A helical membrane pass occupies residues 190–206 (LEAFTVGLVVLVIGTSM). Residues 207 to 210 (GFNS) are Extracellular-facing. The discontinuously helical intramembrane region spans 211–224 (GYAVNPARDFGPRL). The NPA 2 signature appears at 215 to 217 (NPA). The Extracellular portion of the chain corresponds to 225 to 242 (FTALAGWGSAVFTTGQHW). A helical membrane pass occupies residues 243–264 (WWVPIVSPLLGSIAGVFVYQLM). At 265 to 292 (IGCHLEQPPPSNEEENVKLAHVKHKEQI) the chain is on the cytoplasmic side.

It belongs to the MIP/aquaporin (TC 1.A.8) family. In terms of assembly, homotetramer; each monomer provides an independent glycerol/water pore. Could also exist in other oligomeric states. As to expression, widely expressed in epithelial cells of kidney (collecting ducts) and airways, in keratinocytes, immature dendritic cells and erythrocytes. Isoform 2 is not detectable in erythrocytes at the protein level.

It localises to the cell membrane. Its subcellular location is the basolateral cell membrane. It catalyses the reaction glycerol(in) = glycerol(out). It carries out the reaction H2O(in) = H2O(out). The enzyme catalyses H2O2(out) = H2O2(in). The catalysed reaction is urea(in) = urea(out). With respect to regulation, glycerol transport is regulated by pH, with the porin being permeable to glycerol at pH 7.4 but not at pH 5.5. Water permeability, however, is not influenced by pH. Its function is as follows. Aquaglyceroporins form homotetrameric transmembrane channels, with each monomer independently mediating glycerol and water transport across the plasma membrane along their osmotic gradient. Could also be permeable to urea. Also participates in cell permeability to H2O2 and H2O2-mediated signaling. In skin, transports glycerol to the epidermis and stratum corneum, where it maintains hydration, elasticity, and supports lipid biosynthesis for barrier repair. In kidney, contributes to the reabsorption of water, helping the body maintain proper fluid balance. The polypeptide is Aquaporin-3 (Homo sapiens (Human)).